The sequence spans 739 residues: Phosphoribosylformylglycinamidine synthase subunit PurL (739 aa).

The active site involves histidine 49. ATP contacts are provided by tyrosine 52 and lysine 91. Glutamate 93 lines the Mg(2+) pocket. Residues 94 to 97 and arginine 116 each bind substrate; that span reads SHNH. Histidine 95 acts as the Proton acceptor in catalysis. Aspartate 117 is a binding site for Mg(2+). Glutamine 240 contributes to the substrate binding site. Aspartate 268 is a binding site for Mg(2+). Position 312 to 314 (312 to 314) interacts with substrate; sequence ESQ. 2 residues coordinate ATP: aspartate 493 and glycine 530. Asparagine 531 lines the Mg(2+) pocket. Substrate is bound at residue serine 533.

It belongs to the FGAMS family. Monomer. Part of the FGAM synthase complex composed of 1 PurL, 1 PurQ and 2 PurS subunits.

It localises to the cytoplasm. It catalyses the reaction N(2)-formyl-N(1)-(5-phospho-beta-D-ribosyl)glycinamide + L-glutamine + ATP + H2O = 2-formamido-N(1)-(5-O-phospho-beta-D-ribosyl)acetamidine + L-glutamate + ADP + phosphate + H(+). The protein operates within purine metabolism; IMP biosynthesis via de novo pathway; 5-amino-1-(5-phospho-D-ribosyl)imidazole from N(2)-formyl-N(1)-(5-phospho-D-ribosyl)glycinamide: step 1/2. Its function is as follows. Part of the phosphoribosylformylglycinamidine synthase complex involved in the purines biosynthetic pathway. Catalyzes the ATP-dependent conversion of formylglycinamide ribonucleotide (FGAR) and glutamine to yield formylglycinamidine ribonucleotide (FGAM) and glutamate. The FGAM synthase complex is composed of three subunits. PurQ produces an ammonia molecule by converting glutamine to glutamate. PurL transfers the ammonia molecule to FGAR to form FGAM in an ATP-dependent manner. PurS interacts with PurQ and PurL and is thought to assist in the transfer of the ammonia molecule from PurQ to PurL. In Parvibaculum lavamentivorans (strain DS-1 / DSM 13023 / NCIMB 13966), this protein is Phosphoribosylformylglycinamidine synthase subunit PurL.